Here is a 424-residue protein sequence, read N- to C-terminus: Double homeobox protein 4 (424 aa).

Residues 1-10 are compositionally biased toward polar residues; the sequence is MALPTPSDST. 4 disordered regions span residues 1–24, 72–102, 218–362, and 388–414; these read MALP…RRRL, SRQL…TAVT, LQPS…LQEP, and QPLL…PLSE. 2 DNA-binding regions (homeobox) span residues 19–78 and 94–153; these read GRRR…LRQH and GRRK…PGQG. The span at 265–274 shows a compositional bias: basic and acidic residues; the sequence is KSREDRDPQR. Composition is skewed to low complexity over residues 278 to 302 and 319 to 329; these read PGPC…LAPP and AGAAWEPQAGA. The tract at residues 327–424 is required for interaction with EP300 and CREBBP, and for transcriptional activation of target genes; that stretch reads AGAAPPPQPA…EEYRALLEEL (98 aa). The segment at 405–424 is important for transcriptional activation of target genes; that stretch reads AASLEAPLSEEEYRALLEEL.

It belongs to the paired homeobox family. As to quaternary structure, binds DNA as a monomer. Interacts (via C-terminus) with EP300 and CREBBP. Isoform 1: Does not seem to be expressed in normal muscle, but is detected in muscle of individuals with FSHD, and also in testis (at protein level). Isoform 1: Does not seem to be expressed in normal muscle, but in muscle of individuals with FSHD, where it may be toxic to cells. Isoform 2: Detected in skeletal muscle, fibroblasts and testis from healthy individuals.

Its subcellular location is the nucleus. The protein resides in the cytoplasm. In terms of biological role, transcription factor that is selectively and transiently expressed in cleavage-stage embryos. Binds to double-stranded DNA elements with the consensus sequence 5'-TAATCTAATCA-3'. Binds to chromatin containing histone H3 acetylated at 'Lys-27' (H3K27ac) and promotes deacetylation of H3K27ac. In parallel, binds to chromatin that lacks histone H3 acetylation at 'Lys-27' (H3K27ac) and recruits EP300 and CREBBP to promote acetylation of histone H3 at 'Lys-27' at new sites. Involved in transcriptional regulation of numerous genes, primarily as transcriptional activator, but also mediates repression of a set of target genes. Promotes expression of ZSCAN4 and KDM4E, two proteins with essential roles during early embryogenesis. Promotes nuclear translocation of CTNNB1/beta-catenin and its subsequent activation of target genes. Heterologous expression in cultured embryonic stem cells mediates transcription of HERVL retrotransposons and transcripts derived from ACRO1 and HSATII satellite repeats. May activate expression of PITX1. May regulate microRNA (miRNA) expression. Inappropriate expression can inhibit myogenesis and promote apoptosis. Probably inactive as a transcriptional activator, due to the absence of the C-terminal region that is important for transcriptional activation. Can inhibit transcriptional activation mediated by isoform 1. Heterologous expression of isoform 2 has no deleterious effect on cell survival. This Homo sapiens (Human) protein is Double homeobox protein 4.